The sequence spans 347 residues: SUMO-activating enzyme subunit 1 (347 aa).

It belongs to the ubiquitin-activating E1 family. As to quaternary structure, heterodimer of sae1 and uba2/sae2. The heterodimer corresponds to the two domains that are encoded on a single polypeptide chain in ubiquitin-activating enzyme E1. Interacts with ube2i.

It is found in the nucleus. It participates in protein modification; protein sumoylation. In terms of biological role, the heterodimer acts as an E1 ligase for sumo1, sumo2, and sumo3. It mediates ATP-dependent activation of sumo proteins followed by formation of a thioester bond between a sumo protein and a conserved active site cysteine residue on uba2/sae2. In Xenopus tropicalis (Western clawed frog), this protein is SUMO-activating enzyme subunit 1 (sae1).